The chain runs to 272 residues: Phosphatidylglycerol--prolipoprotein diacylglyceryl transferase (272 aa).

Transmembrane regions (helical) follow at residues 15–35, 53–73, 90–110, and 117–137; these read LGPLYVHMYSVFMLAGALVLF, AFAVTSLLIPVILGARLWHVV, IWEGGLGFIGGVFSGLICFFV, and VPPFTFLDALAPGILAALCFA. A 1,2-diacyl-sn-glycero-3-phospho-(1'-sn-glycerol) is bound at residue R138. 3 helical membrane passes run 174–194, 199–219, and 237–257; these read FHPIFLYEIILNVFIIVILLV, VFVKTVFPKGSVFAAFLVLYG, and FGLDLNYVGAAAMIIVGVLIA.

It belongs to the Lgt family.

The protein localises to the cell membrane. The catalysed reaction is L-cysteinyl-[prolipoprotein] + a 1,2-diacyl-sn-glycero-3-phospho-(1'-sn-glycerol) = an S-1,2-diacyl-sn-glyceryl-L-cysteinyl-[prolipoprotein] + sn-glycerol 1-phosphate + H(+). It participates in protein modification; lipoprotein biosynthesis (diacylglyceryl transfer). In terms of biological role, catalyzes the transfer of the diacylglyceryl group from phosphatidylglycerol to the sulfhydryl group of the N-terminal cysteine of a prolipoprotein, the first step in the formation of mature lipoproteins. The protein is Phosphatidylglycerol--prolipoprotein diacylglyceryl transferase of Tropheryma whipplei (strain Twist) (Whipple's bacillus).